Consider the following 171-residue polypeptide: Transcriptional repressor NrdR (171 aa).

Residues 1–10 show a composition bias toward basic residues; it reads MQCPHCHHNG. Positions 1-21 are disordered; the sequence is MQCPHCHHNGSRVVDSRPTDD. A zinc finger spans residues 3 to 34; it reads CPHCHHNGSRVVDSRPTDDGRVIRRRRECENC. The 91-residue stretch at 49-139 folds into the ATP-cone domain; it reads LLVIKKNGAR…VYRQFKDMHV (91 aa). Residues 152-171 are disordered; sequence KVKLAKPSAKTTHAPKRKKD.

It belongs to the NrdR family. Zn(2+) serves as cofactor.

Functionally, negatively regulates transcription of bacterial ribonucleotide reductase nrd genes and operons by binding to NrdR-boxes. This chain is Transcriptional repressor NrdR, found in Lactiplantibacillus plantarum (strain ATCC BAA-793 / NCIMB 8826 / WCFS1) (Lactobacillus plantarum).